Here is a 625-residue protein sequence, read N- to C-terminus: tRNA uridine 5-carboxymethylaminomethyl modification enzyme MnmG (625 aa).

FAD is bound by residues 13–18 (GGGHAG), Val-125, and Ser-182. Position 276–290 (276–290 (GPRYCPSIEDKITRF)) interacts with NAD(+). Gln-373 lines the FAD pocket.

The protein belongs to the MnmG family. Homodimer. Heterotetramer of two MnmE and two MnmG subunits. It depends on FAD as a cofactor.

The protein localises to the cytoplasm. Its function is as follows. NAD-binding protein involved in the addition of a carboxymethylaminomethyl (cmnm) group at the wobble position (U34) of certain tRNAs, forming tRNA-cmnm(5)s(2)U34. This chain is tRNA uridine 5-carboxymethylaminomethyl modification enzyme MnmG, found in Lactococcus lactis subsp. cremoris (strain MG1363).